We begin with the raw amino-acid sequence, 764 residues long: Phenylalanine--tRNA ligase beta subunit (764 aa).

The tRNA-binding domain maps to 38–148; the sequence is CIAPKNVVVG…GELVLGKELH (111 aa). In terms of domain architecture, B5 spans 375–455; the sequence is LKDCALTFQL…RFVGIDNLVS (81 aa). Mg(2+) is bound by residues Asp433, Asp439, Glu442, and Glu443. The FDX-ACB domain occupies 673–763; it reads SIYPSSVRDL…LEKEFNARLK (91 aa).

The protein belongs to the phenylalanyl-tRNA synthetase beta subunit family. Type 1 subfamily. Tetramer of two alpha and two beta subunits. It depends on Mg(2+) as a cofactor.

Its subcellular location is the cytoplasm. It carries out the reaction tRNA(Phe) + L-phenylalanine + ATP = L-phenylalanyl-tRNA(Phe) + AMP + diphosphate + H(+). This is Phenylalanine--tRNA ligase beta subunit (pheT) from Helicobacter pylori (strain J99 / ATCC 700824) (Campylobacter pylori J99).